The following is a 312-amino-acid chain: Cytochrome c biogenesis protein CcsA (312 aa).

Helical transmembrane passes span 18–38 (LGIL…LALF), 48–68 (FFTI…WILS), 73–93 (ISNL…GQLL), 102–122 (IIPV…CFVL), 148–168 (VMLS…VLFI), 216–236 (SILV…IWAN), 250–267 (TWAF…HMRI), and 279–299 (FATS…FLGI).

The protein belongs to the CcmF/CycK/Ccl1/NrfE/CcsA family. May interact with ccs1.

It localises to the cellular thylakoid membrane. Its function is as follows. Required during biogenesis of c-type cytochromes (cytochrome c6 and cytochrome f) at the step of heme attachment. The polypeptide is Cytochrome c biogenesis protein CcsA (Prochlorococcus marinus (strain MIT 9515)).